The following is a 149-amino-acid chain: Myoglobin (149 aa).

At Thr-2 the chain carries N-acetylthreonine. Residues 2-143 (TEWEHVNKVW…ICSDLETLYK (142 aa)) form the Globin domain. A nitrite-binding site is contributed by His-60. His-60 serves as a coordination point for O2. His-89 is a heme b binding site.

Belongs to the globin family. In terms of assembly, monomeric.

The protein resides in the cytoplasm. Its subcellular location is the sarcoplasm. The enzyme catalyses Fe(III)-heme b-[protein] + nitric oxide + H2O = Fe(II)-heme b-[protein] + nitrite + 2 H(+). It carries out the reaction H2O2 + AH2 = A + 2 H2O. Functionally, monomeric heme protein which primary function is to store oxygen and facilitate its diffusion within muscle tissues. Reversibly binds oxygen through a pentacoordinated heme iron and enables its timely and efficient release as needed during periods of heightened demand. Depending on the oxidative conditions of tissues and cells, and in addition to its ability to bind oxygen, it also has a nitrite reductase activity whereby it regulates the production of bioactive nitric oxide. Under stress conditions, like hypoxia and anoxia, it also protects cells against reactive oxygen species thanks to its pseudoperoxidase activity. The sequence is that of Myoglobin (mb) from Heterodontus portusjacksoni (Port Jackson shark).